We begin with the raw amino-acid sequence, 162 residues long: RNA pyrophosphohydrolase (162 aa).

Residues 7–149 (KYRPCVGIML…KKEVYKTVIE (143 aa)) enclose the Nudix hydrolase domain. Residues 40-61 (GGVDDGEELEQAALRELLEEVG) carry the Nudix box motif.

It belongs to the Nudix hydrolase family. RppH subfamily. Requires a divalent metal cation as cofactor.

Functionally, accelerates the degradation of transcripts by removing pyrophosphate from the 5'-end of triphosphorylated RNA, leading to a more labile monophosphorylated state that can stimulate subsequent ribonuclease cleavage. The polypeptide is RNA pyrophosphohydrolase (Wolbachia sp. subsp. Drosophila simulans (strain wRi)).